Consider the following 113-residue polypeptide: uncharacterized protein (113 aa).

This is an uncharacterized protein from Schizosaccharomyces pombe (strain 972 / ATCC 24843) (Fission yeast).